The chain runs to 637 residues: Threonine--tRNA ligase (637 aa).

Positions 1–61 (MPNVKLPDGN…KEDCSLIIVT (61 aa)) constitute a TGS domain. Positions 242–533 (DHRKLGKALD…LIEHYAGKLP (292 aa)) are catalytic. Positions 333, 384, and 510 each coordinate Zn(2+).

This sequence belongs to the class-II aminoacyl-tRNA synthetase family. In terms of assembly, homodimer. Zn(2+) is required as a cofactor.

The protein resides in the cytoplasm. It catalyses the reaction tRNA(Thr) + L-threonine + ATP = L-threonyl-tRNA(Thr) + AMP + diphosphate + H(+). In terms of biological role, catalyzes the attachment of threonine to tRNA(Thr) in a two-step reaction: L-threonine is first activated by ATP to form Thr-AMP and then transferred to the acceptor end of tRNA(Thr). Also edits incorrectly charged L-seryl-tRNA(Thr). In Legionella pneumophila (strain Corby), this protein is Threonine--tRNA ligase.